Consider the following 90-residue polypeptide: YcgL domain-containing protein plu2139 (90 aa).

Positions 1 to 85 (MICAIYSSPK…PVENLMNAHL (85 aa)) constitute a YcgL domain.

The chain is YcgL domain-containing protein plu2139 from Photorhabdus laumondii subsp. laumondii (strain DSM 15139 / CIP 105565 / TT01) (Photorhabdus luminescens subsp. laumondii).